We begin with the raw amino-acid sequence, 357 residues long: Tribbles homolog 3 (357 aa).

The disordered stretch occupies residues Met-1–Thr-63. The tract at residues Met-1 to Leu-127 is interaction with DDIT3/CHOP. The 249-residue stretch at Leu-68–Arg-316 folds into the Protein kinase domain. The tract at residues Asp-333–Gly-357 is disordered. Acidic residues predominate over residues Gly-341–Glu-350.

The protein belongs to the protein kinase superfamily. CAMK Ser/Thr protein kinase family. Tribbles subfamily. As to quaternary structure, interacts with AKT1, AKT2, MAP2K1 and MAP2K7. Interacts with ATF4. Interacts with DDIT3/CHOP and inhibits its interaction with EP300/P300. Interacts with APOBEC3C. Interacts (via N-terminus) with APOBEC3A. Interacts with RELA.

It is found in the nucleus. Functionally, inactive protein kinase which acts as a regulator of the integrated stress response (ISR), a process for adaptation to various stress. Inhibits the transcriptional activity of DDIT3/CHOP and is involved in DDIT3/CHOP-dependent cell death during ER stress. May play a role in programmed neuronal cell death but does not appear to affect non-neuronal cells. Acts as a negative feedback regulator of the ATF4-dependent transcription during the ISR: while TRIB3 expression is promoted by ATF4, TRIB3 protein interacts with ATF4 and inhibits ATF4 transcription activity. Disrupts insulin signaling by binding directly to Akt kinases and blocking their activation. May bind directly to and mask the 'Thr-308' phosphorylation site in AKT1. Interacts with the NF-kappa-B transactivator p65 RELA and inhibits its phosphorylation and thus its transcriptional activation activity. Interacts with MAPK kinases and regulates activation of MAP kinases. Can inhibit APOBEC3A editing of nuclear DNA. This is Tribbles homolog 3 (TRIB3) from Bos taurus (Bovine).